Here is a 317-residue protein sequence, read N- to C-terminus: Apolipoprotein E (317 aa).

An N-terminal signal peptide occupies residues 1-18; it reads MKVLWVALVITLLAGCQA. 8 consecutive repeat copies span residues 80-101, 102-123, 124-145, 146-167, 168-189, 190-211, 212-233, and 234-255. An 8 X 22 AA approximate tandem repeats region spans residues 80-255; the sequence is VLMDETMKEV…HLEEMREQLD (176 aa). M143 is subject to Methionine sulfoxide. The tract at residues 158–168 is LDL and other lipoprotein receptors binding; it reads HLRKLRKRLLR. 162–165 serves as a coordination point for heparin; the sequence is LRKR. Residues 210–290 form a lipid-binding and lipoprotein association region; that stretch reads AATVGTLASQ…SWFEPLVEDM (81 aa). 229 to 236 contacts heparin; that stretch reads HQKLRGRV. Residues 266 to 317 are homooligomerization; it reads TQMRLQAEAFQARLKSWFEPLVEDMQRQWAGLVEKVQLAMATSSTSAPSENH. Residues 278-290 are specificity for association with VLDL; the sequence is RLKSWFEPLVEDM.

This sequence belongs to the apolipoprotein A1/A4/E family. Homotetramer. May interact with ABCA1; functionally associated with ABCA1 in the biogenesis of HDLs. May interact with APP/A4 amyloid-beta peptide; the interaction is extremely stable in vitro but its physiological significance is unclear. May interact with MAPT. May interact with MAP2. In the cerebrospinal fluid, interacts with secreted SORL1. Interacts with PMEL; this allows the loading of PMEL luminal fragment on ILVs to induce fibril nucleation. In terms of processing, APOE exists as multiple glycosylated and sialylated glycoforms within cells and in plasma. The extent of glycosylation and sialylation are tissue and context specific. Glycated in plasma VLDL. Post-translationally, phosphorylated by FAM20C in the extracellular medium.

It is found in the secreted. The protein localises to the extracellular space. It localises to the extracellular matrix. The protein resides in the extracellular vesicle. Its subcellular location is the endosome. It is found in the multivesicular body. Functionally, APOE is an apolipoprotein, a protein associating with lipid particles, that mainly functions in lipoprotein-mediated lipid transport between organs via the plasma and interstitial fluids. APOE is a core component of plasma lipoproteins and is involved in their production, conversion and clearance. Apolipoproteins are amphipathic molecules that interact both with lipids of the lipoprotein particle core and the aqueous environment of the plasma. As such, APOE associates with chylomicrons, chylomicron remnants, very low density lipoproteins (VLDL) and intermediate density lipoproteins (IDL) but shows a preferential binding to high-density lipoproteins (HDL). It also binds a wide range of cellular receptors including the LDL receptor/LDLR and the very low-density lipoprotein receptor/VLDLR that mediate the cellular uptake of the APOE-containing lipoprotein particles. Finally, APOE also has a heparin-binding activity and binds heparan-sulfate proteoglycans on the surface of cells, a property that supports the capture and the receptor-mediated uptake of APOE-containing lipoproteins by cells. This Physeter macrocephalus (Sperm whale) protein is Apolipoprotein E (APOE).